A 31-amino-acid polypeptide reads, in one-letter code: Fibrinogen beta chain (31 aa).

Acidic residues predominate over residues His-1–Glu-10. The interval His-1–Ala-31 is disordered. Tyr-2 bears the Sulfotyrosine; partial mark. A Sulfotyrosine modification is found at Tyr-3. A compositionally biased stretch (basic and acidic residues) spans Ala-18–Ala-31.

As to quaternary structure, heterohexamer; disulfide linked. Contains 2 sets of 3 non-identical chains (alpha, beta and gamma). The 2 heterotrimers are in head to head conformation with the N-termini in a small central domain. Post-translationally, conversion of fibrinogen to fibrin is triggered by thrombin, which cleaves fibrinopeptides A and B from alpha and beta chains, and thus exposes the N-terminal polymerization sites responsible for the formation of the soft clot.

Its subcellular location is the secreted. Its function is as follows. Cleaved by the protease thrombin to yield monomers which, together with fibrinogen alpha (FGA) and fibrinogen gamma (FGG), polymerize to form an insoluble fibrin matrix. Fibrin has a major function in hemostasis as one of the primary components of blood clots. In addition, functions during the early stages of wound repair to stabilize the lesion and guide cell migration during re-epithelialization. Was originally thought to be essential for platelet aggregation, based on in vitro studies using anticoagulated blood. However subsequent studies have shown that it is not absolutely required for thrombus formation in vivo. Enhances expression of SELP in activated platelets. Maternal fibrinogen is essential for successful pregnancy. Fibrin deposition is also associated with infection, where it protects against IFNG-mediated hemorrhage. May also facilitate the antibacterial immune response via both innate and T-cell mediated pathways. The polypeptide is Fibrinogen beta chain (FGB) (Canis lupus familiaris (Dog)).